A 429-amino-acid chain; its full sequence is Carbamoyl phosphate synthase arginine-specific small chain (429 aa).

A mitochondrion-targeting transit peptide spans 1–20 (MIRVIQPPLIASKQLFRRYL). The Glutamine amidotransferase type-1 domain occupies 218-406 (HIAVLDCGAK…FENIEQYRAT (189 aa)). The Nucleophile role is filled by cysteine 295. Residues histidine 379 and glutamate 381 contribute to the active site.

It belongs to the CarA family. In terms of assembly, heterodimer composed of 2 chains; the small (or glutamine) chain promotes the hydrolysis of glutamine to ammonia, which is used by the large (or ammonia) chain to synthesize carbamoyl phosphate.

It is found in the mitochondrion matrix. It catalyses the reaction hydrogencarbonate + L-glutamine + 2 ATP + H2O = carbamoyl phosphate + L-glutamate + 2 ADP + phosphate + 2 H(+). The catalysed reaction is L-glutamine + H2O = L-glutamate + NH4(+). It functions in the pathway amino-acid biosynthesis; L-arginine biosynthesis; carbamoyl phosphate from bicarbonate: step 1/1. Its function is as follows. Small subunit of the arginine-specific carbamoyl phosphate synthase (CPSase). CPSase catalyzes the formation of carbamoyl phosphate from the ammonia moiety of glutamine, carbonate, and phosphate donated by ATP, the first step of the arginine biosynthetic pathway. The small subunit (glutamine amidotransferase) binds and cleaves glutamine to supply the large subunit with the substrate ammonia. In Debaryomyces hansenii (strain ATCC 36239 / CBS 767 / BCRC 21394 / JCM 1990 / NBRC 0083 / IGC 2968) (Yeast), this protein is Carbamoyl phosphate synthase arginine-specific small chain (CPA1).